Reading from the N-terminus, the 319-residue chain is MADKVQTTLLFLAVGEFSVGILGNAFIGLVNCMDWVKKRKIASIDLILTSLAISRICLLCVILLDCFILVLYPDVYATGKEMRIIDFFWTLTNHLSIWFATCLSIYYXFRIANFFHPLFLWMKWRIDRVISWILLGCVVLSVFISLPATENLNADFRFCVKAKRKTNLTWSCRVNKTQHASTKLFLNLATLLPFCVCLMSFFLLILSLRRHIRRMQLSATGCRDPSTEAHVRALKAVISFLLLFIAYYLSFLVATSSYFMPETELAVIFGESIALIYPSSHSFILILGNNKLRHASLKVIWKVMSILKGRKFQQHKQIG.

The Extracellular segment spans residues 1 to 9 (MADKVQTTL). The chain crosses the membrane as a helical span at residues 10-30 (LFLAVGEFSVGILGNAFIGLV). Residues 31-55 (NCMDWVKKRKIASIDLILTSLAISR) lie on the Cytoplasmic side of the membrane. A helical transmembrane segment spans residues 56 to 76 (ICLLCVILLDCFILVLYPDVY). The Extracellular segment spans residues 77 to 94 (ATGKEMRIIDFFWTLTNH). Residues 95–115 (LSIWFATCLSIYYXFRIANFF) form a helical membrane-spanning segment. The Cytoplasmic portion of the chain corresponds to 116-128 (HPLFLWMKWRIDR). Residues 129 to 149 (VISWILLGCVVLSVFISLPAT) form a helical membrane-spanning segment. Residues 150–187 (ENLNADFRFCVKAKRKTNLTWSCRVNKTQHASTKLFLN) lie on the Extracellular side of the membrane. N167 and N175 each carry an N-linked (GlcNAc...) asparagine glycan. Residues 188–208 (LATLLPFCVCLMSFFLLILSL) traverse the membrane as a helical segment. The Cytoplasmic portion of the chain corresponds to 209–235 (RRHIRRMQLSATGCRDPSTEAHVRALK). Residues 236-256 (AVISFLLLFIAYYLSFLVATS) traverse the membrane as a helical segment. Residues 257 to 266 (SYFMPETELA) lie on the Extracellular side of the membrane. Residues 267–287 (VIFGESIALIYPSSHSFILIL) traverse the membrane as a helical segment. Residues 288–319 (GNNKLRHASLKVIWKVMSILKGRKFQQHKQIG) lie on the Cytoplasmic side of the membrane.

Belongs to the G-protein coupled receptor T2R family.

The protein localises to the membrane. Functionally, gustducin-coupled receptor implicated in the perception of bitter compounds in the oral cavity and the gastrointestinal tract. Signals through PLCB2 and the calcium-regulated cation channel TRPM5. This Pan troglodytes (Chimpanzee) protein is Taste receptor type 2 member 7 (TAS2R7).